The following is a 140-amino-acid chain: Nucleoside diphosphate kinase (140 aa).

Positions 11, 59, 87, 93, 104, and 114 each coordinate ATP. The active-site Pros-phosphohistidine intermediate is the histidine 117.

Belongs to the NDK family. Homotetramer. It depends on Mg(2+) as a cofactor.

Its subcellular location is the cytoplasm. It carries out the reaction a 2'-deoxyribonucleoside 5'-diphosphate + ATP = a 2'-deoxyribonucleoside 5'-triphosphate + ADP. The catalysed reaction is a ribonucleoside 5'-diphosphate + ATP = a ribonucleoside 5'-triphosphate + ADP. Its function is as follows. Major role in the synthesis of nucleoside triphosphates other than ATP. The ATP gamma phosphate is transferred to the NDP beta phosphate via a ping-pong mechanism, using a phosphorylated active-site intermediate. The polypeptide is Nucleoside diphosphate kinase (Dinoroseobacter shibae (strain DSM 16493 / NCIMB 14021 / DFL 12)).